A 118-amino-acid chain; its full sequence is uncharacterized protein (118 aa).

Transmembrane regions (helical) follow at residues V20–I39, L46–V63, and L67–G85. Positions G85–E118 are disordered. Residues S88–S97 show a composition bias toward basic residues. The span at D103–E118 shows a compositional bias: acidic residues.

The protein localises to the cell membrane. This is an uncharacterized protein from Archaeoglobus fulgidus (strain ATCC 49558 / DSM 4304 / JCM 9628 / NBRC 100126 / VC-16).